Consider the following 420-residue polypeptide: Glycerol-3-phosphate dehydrogenase [NAD(+)] 2, chloroplastic (420 aa).

The transit peptide at 1–45 (MAASVQPACLDLHFSGKHPPLLKHNAIIVRCVSSPNVIPEADSIS) directs the protein to the chloroplast. NAD(+)-binding positions include 94 to 99 (GGGSFG), Phe-171, Lys-194, and Ala-228. Lys-194 contributes to the substrate binding site. Lys-279 acts as the Proton acceptor in catalysis. Arg-343 and Glu-369 together coordinate NAD(+). 343-344 (RN) provides a ligand contact to substrate.

This sequence belongs to the NAD-dependent glycerol-3-phosphate dehydrogenase family.

The protein resides in the plastid. Its subcellular location is the chloroplast. It carries out the reaction sn-glycerol 3-phosphate + NAD(+) = dihydroxyacetone phosphate + NADH + H(+). Its pathway is membrane lipid metabolism; glycerophospholipid metabolism. Functionally, required to supply glycerol-3-phosphate in the chloroplast for the synthesis of glycerolipids. Required for activation of systemic acquired resistance (SAR). Provision of glycerol-3-phosphate may be involved in generating lipid signals necessary for mediating defense responses and SAR. The polypeptide is Glycerol-3-phosphate dehydrogenase [NAD(+)] 2, chloroplastic (GLY1) (Arabidopsis thaliana (Mouse-ear cress)).